The following is a 297-amino-acid chain: Probable ABC transporter phosphite binding protein PhnD1 (297 aa).

Residues 1-24 (MFNLKYFLVSSSLLFSVFSSPVFS) form the signal peptide.

It belongs to the phosphate/phosphite/phosphonate binding protein family. As to quaternary structure, the complex may be composed of two ATP-binding proteins (PhnC1), two transmembrane proteins (PhnE1) and a solute-binding protein (PhnD1).

The protein localises to the periplasm. Its function is as follows. Probably part of the ABC transporter complex PhnD1C1E1. Binds strongly to inorganic phosphite and with very weak affinities to methylphosphonate (MPn) and phosphate. This Prochlorococcus marinus (strain MIT 9301) protein is Probable ABC transporter phosphite binding protein PhnD1.